The primary structure comprises 509 residues: Probable cytochrome P450 6a14 (509 aa).

Residue Cys-454 coordinates heme.

Belongs to the cytochrome P450 family. Heme is required as a cofactor.

The protein localises to the endoplasmic reticulum membrane. It is found in the microsome membrane. Functionally, may be involved in the metabolism of insect hormones and in the breakdown of synthetic insecticides. This is Probable cytochrome P450 6a14 (Cyp6a14) from Drosophila melanogaster (Fruit fly).